The sequence spans 526 residues: Peptide chain release factor 3 (526 aa).

One can recognise a tr-type G domain in the interval 9–277; that stretch reads NKRRTFAIIS…DFVEYAPGPQ (269 aa). Residues 18–25, 86–90, and 140–143 each bind GTP; these read SHPDAGKT, DTPGH, and NKLD.

It belongs to the TRAFAC class translation factor GTPase superfamily. Classic translation factor GTPase family. PrfC subfamily.

Its subcellular location is the cytoplasm. Functionally, increases the formation of ribosomal termination complexes and stimulates activities of RF-1 and RF-2. It binds guanine nucleotides and has strong preference for UGA stop codons. It may interact directly with the ribosome. The stimulation of RF-1 and RF-2 is significantly reduced by GTP and GDP, but not by GMP. In Legionella pneumophila (strain Paris), this protein is Peptide chain release factor 3.